We begin with the raw amino-acid sequence, 452 residues long: Mitochondrial import inner membrane translocase subunit TIM44 (452 aa).

A Phosphothreonine modification is found at T128. Residue 166–173 (GGEKLGRT) participates in ATP binding. S180 is modified (phosphoserine). The residue at position 217 (K217) is an N6-succinyllysine.

Belongs to the Tim44 family. As to quaternary structure, probable component of the PAM complex at least composed of a mitochondrial HSP70 protein, GRPEL1 or GRPEL2, TIMM44, TIMM16/PAM16 and TIMM14/DNAJC19. The complex interacts with the TIMM23 component of the TIM23 complex. Interacts with SLC25A4/ANT1 and SLC25A5/ANT2; leading to inhibit the presequence translocase TIMM23, thereby promoting stabilization of PINK1.

The protein resides in the mitochondrion inner membrane. It is found in the mitochondrion matrix. Functionally, essential component of the PAM complex, a complex required for the translocation of transit peptide-containing proteins from the inner membrane into the mitochondrial matrix in an ATP-dependent manner. Recruits mitochondrial HSP70 to drive protein translocation into the matrix using ATP as an energy source. This chain is Mitochondrial import inner membrane translocase subunit TIM44 (TIMM44), found in Homo sapiens (Human).